Here is a 295-residue protein sequence, read N- to C-terminus: Protease HtpX (295 aa).

Transmembrane regions (helical) follow at residues isoleucine 4 to leucine 24 and glutamine 42 to serine 62. Residue histidine 147 coordinates Zn(2+). The active site involves glutamate 148. Histidine 151 serves as a coordination point for Zn(2+). 2 helical membrane passes run valine 158–isoleucine 178 and valine 199–phenylalanine 219. Glutamate 224 lines the Zn(2+) pocket.

The protein belongs to the peptidase M48B family. It depends on Zn(2+) as a cofactor.

The protein resides in the cell inner membrane. This is Protease HtpX from Pseudomonas fluorescens (strain ATCC BAA-477 / NRRL B-23932 / Pf-5).